A 143-amino-acid chain; its full sequence is MRHSKSGRKLNRTASHRKAMFANMAISLIEHEQIVTTLPKAKEIRPIVEKLVTLGKRGGLHARRQAIAALRDAGKVAKLFDTLAPRYASRNGGYLRIMKAGFRTGDNAPMAVIEFVDRDVDAKGAVDRARAESAANEKEASSL.

It belongs to the bacterial ribosomal protein bL17 family. In terms of assembly, part of the 50S ribosomal subunit. Contacts protein L32.

The chain is Large ribosomal subunit protein bL17 from Bartonella quintana (strain Toulouse) (Rochalimaea quintana).